Here is a 110-residue protein sequence, read N- to C-terminus: UPF0122 protein BcerKBAB4_3669 (110 aa).

It belongs to the UPF0122 family.

In terms of biological role, might take part in the signal recognition particle (SRP) pathway. This is inferred from the conservation of its genetic proximity to ftsY/ffh. May be a regulatory protein. The sequence is that of UPF0122 protein BcerKBAB4_3669 from Bacillus mycoides (strain KBAB4) (Bacillus weihenstephanensis).